Reading from the N-terminus, the 596-residue chain is Linalool synthase TPS3, chloroplastic (596 aa).

A chloroplast-targeting transit peptide spans 1-39 (MISSLNPLFTTHRSGVIAQQFFASSAAASINSVSSLKIA). 5 residues coordinate (2E)-geranyl diphosphate: Arg308, Asp345, Asp349, Arg486, and Asn489. The Mg(2+) site is built by Asp345 and Asp349. The DDXXD motif signature appears at 345 to 349 (DDIYD). Mg(2+) is bound by residues Asn489, Thr493, and Ser497.

Belongs to the terpene synthase family. Tpsb subfamily. In terms of assembly, monomer. Mg(2+) is required as a cofactor. The cofactor is Mn(2+). As to expression, expressed in flowers and fruits.

The protein localises to the plastid. The protein resides in the chloroplast. The catalysed reaction is (2E)-geranyl diphosphate = beta-myrcene + diphosphate. It catalyses the reaction (2E)-geranyl diphosphate + H2O = linalool + diphosphate. The enzyme catalyses (2E)-geranyl diphosphate = (Z)-beta-ocimene + diphosphate. It carries out the reaction (2E)-geranyl diphosphate = (E)-beta-ocimene + diphosphate. Its pathway is secondary metabolite biosynthesis; terpenoid biosynthesis. In terms of biological role, monoterpene synthase (mono-TPS) involved in the biosynthesis of monoterpenes natural products, constituent of coffee beverage aroma. Catalyzes the conversion of (2E)-geranyl diphosphate (GPP) into linalool and beta-myrcene, and, as minor products, cis-ocimene and trans-ocimene. Not able to use geranylgeranyl pyrophosphate (GGPP) and farnesyl pyrophosphate (FPP) as substrates. The polypeptide is Linalool synthase TPS3, chloroplastic (Coffea arabica (Arabian coffee)).